Reading from the N-terminus, the 240-residue chain is UDP-2,3-diacylglucosamine hydrolase (240 aa).

Residues D8, H10, D41, N79, and H114 each contribute to the Mn(2+) site. Residue 79–80 (NR) participates in substrate binding. D122, S160, N164, K167, and H195 together coordinate substrate. Mn(2+) is bound by residues H195 and H197.

This sequence belongs to the LpxH family. Mn(2+) serves as cofactor.

The protein localises to the cell inner membrane. The enzyme catalyses UDP-2-N,3-O-bis[(3R)-3-hydroxytetradecanoyl]-alpha-D-glucosamine + H2O = 2-N,3-O-bis[(3R)-3-hydroxytetradecanoyl]-alpha-D-glucosaminyl 1-phosphate + UMP + 2 H(+). It participates in glycolipid biosynthesis; lipid IV(A) biosynthesis; lipid IV(A) from (3R)-3-hydroxytetradecanoyl-[acyl-carrier-protein] and UDP-N-acetyl-alpha-D-glucosamine: step 4/6. In terms of biological role, hydrolyzes the pyrophosphate bond of UDP-2,3-diacylglucosamine to yield 2,3-diacylglucosamine 1-phosphate (lipid X) and UMP by catalyzing the attack of water at the alpha-P atom. Involved in the biosynthesis of lipid A, a phosphorylated glycolipid that anchors the lipopolysaccharide to the outer membrane of the cell. The chain is UDP-2,3-diacylglucosamine hydrolase from Shigella sonnei (strain Ss046).